Consider the following 438-residue polypeptide: L-fucose-proton symporter (438 aa).

At 2–26 (GNTSIQTQSYRAVDKDAGQSRSYII) the chain is on the cytoplasmic side. A helical transmembrane segment spans residues 27–53 (PFALLCSLFFLWAVANNLNDILLPQFQ). Residues 54–61 (QAFTLTNF) lie on the Periplasmic side of the membrane. Residues 62-87 (QAGLIQSAFYFGYFIIPIPAGILMKK) form a helical membrane-spanning segment. At 88-90 (LSY) the chain is on the cytoplasmic side. Residues 91–113 (KAGIITGLFLYALGAALFWPAAE) form a helical membrane-spanning segment. At 114-117 (IMNY) the chain is on the periplasmic side. Residues 118–144 (TLFLVGLFIIAAGLGCLETAANPFVTV) traverse the membrane as a helical segment. Topologically, residues 145–150 (LGPESS) are cytoplasmic. Residues 151 to 178 (GHFRLNLAQTFNSFGAIIAVVFGQSLIL) traverse the membrane as a helical segment. Residues 179–193 (SNVPHQSQDVLDKMS) lie on the Periplasmic side of the membrane. The chain crosses the membrane as a helical span at residues 194–227 (PEQLSAYKHSLVLSVQTPYMIIVAIVLLVALLIM). At 228-257 (LTKFPALQSDNHSDAKQGSFSASLSRLARI) the chain is on the cytoplasmic side. A helical membrane pass occupies residues 258-287 (RHWRWAVLAQFCYVGAQTACWSYLIRYAVE). The Periplasmic segment spans residues 288–293 (EIPGMT). Residues 294 to 319 (AGFAANYLTGTMVCFFIGRFTGTWLI) traverse the membrane as a helical segment. At 320–324 (SRFAP) the chain is on the cytoplasmic side. A helical transmembrane segment spans residues 325–343 (HKVLAAYALIAMALCLISA). Over 344–347 (FAGG) the chain is Periplasmic. A helical membrane pass occupies residues 348–372 (HVGLIALTLCSAFMSIQYPTIFSLG). Topologically, residues 373-379 (IKNLGQD) are cytoplasmic. The chain crosses the membrane as a helical span at residues 380 to 407 (TKYGSSFIVMTIIGGGIVTPVMGFVSDA). At 408 to 410 (AGN) the chain is on the periplasmic side. The chain crosses the membrane as a helical span at residues 411 to 430 (IPTAELIPALCFAVIFIFAR). The Cytoplasmic segment spans residues 431 to 438 (FRSQTATN).

This sequence belongs to the major facilitator superfamily. FHS transporter (TC 2.A.1.7) family.

It is found in the cell inner membrane. It catalyses the reaction L-fucose(in) + H(+)(in) = L-fucose(out) + H(+)(out). It carries out the reaction D-arabinose(out) + H(+)(out) = D-arabinose(in) + H(+)(in). The catalysed reaction is L-galactose(out) + H(+)(out) = L-galactose(in) + H(+)(in). Its function is as follows. Mediates the uptake of L-fucose across the boundary membrane with the concomitant transport of protons into the cell (symport system). Can also transport L-galactose and D-arabinose, but at reduced rates compared with L-fucose. Is not able to transport L-rhamnose and L-arabinose. Binds D-arabinose with the highest affinity, followed by L-fucose, and then by L-galactose. This chain is L-fucose-proton symporter (fucP), found in Escherichia coli (strain K12).